The following is a 103-amino-acid chain: NADH dehydrogenase [ubiquinone] 1 beta subcomplex subunit 7 (103 aa).

Positions 27 to 69 constitute a CHCH domain; it reads RDMCAHLLIPLNKCRQAEFYLPWKCEDERHVYEKCEYELVMER. Short sequence motifs (cx9C motif) lie at residues 30–40 and 51–61; these read CAHLLIPLNKC and CEDERHVYEKC. Cystine bridges form between C30–C61 and C40–C51.

It belongs to the complex I NDUFB7 subunit family. As to quaternary structure, complex I is composed of at least 49 different subunits.

It is found in the mitochondrion. The protein resides in the mitochondrion inner membrane. It localises to the mitochondrion intermembrane space. Its function is as follows. Accessory subunit of the mitochondrial membrane respiratory chain NADH dehydrogenase (Complex I), that is believed not to be involved in catalysis. Complex I functions in the transfer of electrons from NADH to the respiratory chain. The immediate electron acceptor for the enzyme is believed to be ubiquinone. The chain is NADH dehydrogenase [ubiquinone] 1 beta subcomplex subunit 7 from Arabidopsis thaliana (Mouse-ear cress).